The chain runs to 745 residues: Prolyl oligopeptidase ophP (745 aa).

Catalysis depends on charge relay system residues serine 580, aspartate 665, and histidine 701.

The protein belongs to the peptidase S9A family. Monomer.

The enzyme catalyses Hydrolysis of Pro-|-Xaa &gt;&gt; Ala-|-Xaa in oligopeptides.. The protein operates within mycotoxin biosynthesis. Its function is as follows. Prolyl oligopeptidase; part of the gene cluster that mediates the biosynthesis of omphalotin A, a highly methylated cyclic dodecapeptide with nematodicidal activity. Excises and catalyzes the macrocyclization of the methylated core peptide of OphMA to yield omphalotin A. OphP works in a two-step fashion with an initial cleavage at the N-terminus, followed by a second cleavage at the C-terminus of the core peptide. According to this mechanism, the free N-terminus of the core peptide, generated by the first cleavage, attacks the covalent intermediate of the second cleavage, which results in macrocyclization of the core peptide. This is Prolyl oligopeptidase ophP from Omphalotus olearius (Jack o'lantern).